The chain runs to 357 residues: Transactivator protein DR7 (357 aa).

Residues 107–187 (LVGKDGAVYV…LLTVGGLCQT (81 aa)) form an interaction with host p53 region.

Belongs to the herpesviridae US22 family. Interacts with host p53 and inhibits p53-activated transcription.

Its function is as follows. Involved in transactivation. Displays transforming activity. This chain is Transactivator protein DR7 (DR7L), found in Homo sapiens (Human).